The following is a 439-amino-acid chain: Acyl-coenzyme A thioesterase 9, mitochondrial (439 aa).

Residues 1–21 (MKRAAIRLWTLNKGLLTHGRG) constitute a mitochondrion transit peptide. 2 HotDog ACOT-type domains span residues 85-209 (SYIE…RDSE) and 289-401 (EDTK…EKEV). Lys102 carries the post-translational modification N6-acetyllysine.

This sequence belongs to the acyl coenzyme A hydrolase family. As to quaternary structure, interacts with NYAP1, NYAP2 and MYO16. Widely expressed.

The protein localises to the mitochondrion. It localises to the mitochondrion matrix. Its subcellular location is the mitochondrion inner membrane. The enzyme catalyses butanoyl-CoA + H2O = butanoate + CoA + H(+). It catalyses the reaction propanoyl-CoA + H2O = propanoate + CoA + H(+). The catalysed reaction is hexadecanoyl-CoA + H2O = hexadecanoate + CoA + H(+). It carries out the reaction octanoyl-CoA + H2O = octanoate + CoA + H(+). The enzyme catalyses decanoyl-CoA + H2O = decanoate + CoA + H(+). It catalyses the reaction tetradecanoyl-CoA + H2O = tetradecanoate + CoA + H(+). The catalysed reaction is 4,8-dimethylnonanoyl-CoA + H2O = 4,8-dimethylnonanoate + CoA + H(+). It carries out the reaction 3-methylbutanoyl-CoA + H2O = 3-methylbutanoate + CoA + H(+). The enzyme catalyses 2-methylpropanoyl-CoA + H2O = 2-methylpropanoate + CoA + H(+). It functions in the pathway lipid metabolism; fatty acid metabolism. With respect to regulation, strongly inhibited by NADH and CoA. Its function is as follows. Mitochondrial acyl-CoA thioesterase. Catalyzes the hydrolysis of acyl-CoAs into free fatty acids and coenzyme A (CoA), regulating their respective intracellular levels. Shows a clear preference for hydrophobic short-, medium-, and long-chain saturated acyl-CoAs with some activity also with short-chain dicarboxylic CoA esters. Regulates both mitochondrial lipid and amino acid metabolism. This chain is Acyl-coenzyme A thioesterase 9, mitochondrial (Acot9), found in Mus musculus (Mouse).